The sequence spans 238 residues: Zwei Ig domain protein zig-2 (238 aa).

The first 17 residues, 1 to 17 (MLKFTAISFVLLNAAES), serve as a signal peptide directing secretion. The region spanning 31–130 (PLLKFTRTPN…NGLTKLEHVA (100 aa)) is the Ig-like C2-type 1 domain. Residues asparagine 40 and asparagine 43 are each glycosylated (N-linked (GlcNAc...) asparagine). Cysteine 54 and cysteine 117 are disulfide-bonded. Asparagine 137, asparagine 206, and asparagine 216 each carry an N-linked (GlcNAc...) asparagine glycan. Positions 149–230 (PFISMTVDFR…NHFGETTAIT (82 aa)) constitute an Ig-like C2-type 2 domain. An intrachain disulfide couples cysteine 170 to cysteine 217.

In terms of tissue distribution, expressed in PVT neurons and weakly in some head neurons.

It localises to the secreted. In terms of biological role, probably not involved in maintaining the position of ASI and ASH head neuron cell bodies and ventral nerve cord axons of PVQ, PVP, RMEV, AVK and HSN neurons. The protein is Zwei Ig domain protein zig-2 of Caenorhabditis elegans.